The sequence spans 279 residues: Aspartate/glutamate leucyltransferase (279 aa).

A disordered region spans residues 245 to 279; sequence ARERGARPPRGPGALKDACDLPLSDAQPADIEDLD.

Belongs to the R-transferase family. Bpt subfamily.

It localises to the cytoplasm. It catalyses the reaction N-terminal L-glutamyl-[protein] + L-leucyl-tRNA(Leu) = N-terminal L-leucyl-L-glutamyl-[protein] + tRNA(Leu) + H(+). The catalysed reaction is N-terminal L-aspartyl-[protein] + L-leucyl-tRNA(Leu) = N-terminal L-leucyl-L-aspartyl-[protein] + tRNA(Leu) + H(+). Functionally, functions in the N-end rule pathway of protein degradation where it conjugates Leu from its aminoacyl-tRNA to the N-termini of proteins containing an N-terminal aspartate or glutamate. This chain is Aspartate/glutamate leucyltransferase, found in Caulobacter vibrioides (strain ATCC 19089 / CIP 103742 / CB 15) (Caulobacter crescentus).